A 402-amino-acid chain; its full sequence is MAARPGPLWLLGLTLCALGGGGPGLRPPPGCPQRRLGARERRDVQREILAVLGLPGRPRPRAPPAASRLPASAPLFMLDLYHAMAGDDDEDGAPAEQRLGRADLVMSFVNMVERDRALGHQEPHWKEFRFDLTQIPAGEAVTAAEFRIYKVPSIHLLNRTLHVSMFQVVQEQSNRESDLFFLDLQTLRAGDEGWLVLDVTAASDCWLLKRHKDLGLRLYVETEDGHSVDPGLAGLLGQRAPRSQQPFVVTFFRASPSPIRTPRAVRPLRRRQPKKSNELPQANRLPGIFDDVRGSHGRQVCRRHELYVSFQDLGWLDWVIAPQGYSAYYCEGECSFPLDSCMNATNHAILQSLVHLMKPNAVPKACCAPTKLSATSVLYYDSSNNVILRKHRNMVVKACGCH.

The N-terminal stretch at 1-19 (MAARPGPLWLLGLTLCALG) is a signal peptide. The propeptide occupies 20-263 (GGGPGLRPPP…ASPSPIRTPR (244 aa)). N-linked (GlcNAc...) asparagine glycans are attached at residues Asn158 and Asn343. 3 cysteine pairs are disulfide-bonded: Cys301/Cys367, Cys330/Cys399, and Cys334/Cys401.

This sequence belongs to the TGF-beta family. In terms of assembly, homodimer; disulfide-linked.

The protein resides in the secreted. Functionally, induces cartilage and bone formation. May be the osteoinductive factor responsible for the phenomenon of epithelial osteogenesis. Plays a role in calcium regulation and bone homeostasis. Signaling protein involved in regulation of thermogenesis and energy balance. Proposed to increase the peripheral response of brown adipose tissue (BAT) to adrenergic stimulation while acting centrally in the hypothalamus to increase sympathetic output to BAT. Growth factor of the TGF-beta superfamily that plays important role in various biological processes, including spermatogenesis, osteogenesis, steroidogenesis as well as regulation of energy balance. Initiates the canonical BMP signaling cascade by associating with type I receptor BMPR1A and type II receptor BMPR2. Once all three components are bound together in a complex at the cell surface, BMPR2 phosphorylates and activates BMPR1A. In turn, BMPR1A propagates signal by phosphorylating SMAD1/5/8 that travel to the nucleus and act as activators and repressors of transcription of target genes. In addition, activates the SMAD2/3 pathway. The protein is Bone morphogenetic protein 8A (BMP8A) of Homo sapiens (Human).